A 538-amino-acid chain; its full sequence is Anti-bacteriophage protein A (538 aa).

Interacts with AbpB.

Its function is as follows. Part of an antiviral system composed of AbpA and AbpB; when both are expressed from a plasmid they confer resistance to phages T2, T4, T7 and lambda but not RB32 or RB69. Resistance is temperature dependent, it can be seen at 30 degrees Celsius but not at 37 or 42 degrees Celsius. The system impairs phage but not bacterial DNA synthesis (shown for T4, T7 and lambda). Partially suppressed by mutations in T4 gene 41, a replicative helicase. This chain is Anti-bacteriophage protein A, found in Escherichia coli (strain K12).